A 505-amino-acid polypeptide reads, in one-letter code: Band 7 protein CG42540 (505 aa).

Positions 1 to 164 (MPDSMMDMEH…IHRAEARRAD (164 aa)) are disordered. Positions 47–60 (SEERDRDRDRERDH) are enriched in basic and acidic residues. 2 stretches are compositionally biased toward low complexity: residues 82 to 104 (QLHQ…QQPQ) and 113 to 139 (QQQQ…QQLP). A helical membrane pass occupies residues 178–198 (LIFLSVALVIMTLPFSLFVCF). The tract at residues 443–505 (GNTPPPLQLA…QQGQQISSAM (63 aa)) is disordered. Over residues 451–505 (LAPQQQMGQQQQPQYQQPQQQQQQYQPQQQQQQQQQQPQQQDQLYQQGQQISSAM) the composition is skewed to low complexity.

The protein belongs to the band 7/mec-2 family.

It is found in the membrane. This is Band 7 protein CG42540 from Drosophila melanogaster (Fruit fly).